The chain runs to 118 residues: NADPH-dependent 7-cyano-7-deazaguanine reductase (118 aa).

Cys-31 serves as the catalytic Thioimide intermediate. Asp-38 acts as the Proton donor in catalysis. Substrate is bound by residues 53-55 (VEL) and 72-73 (YE).

This sequence belongs to the GTP cyclohydrolase I family. QueF type 1 subfamily.

Its subcellular location is the cytoplasm. It catalyses the reaction 7-aminomethyl-7-carbaguanine + 2 NADP(+) = 7-cyano-7-deazaguanine + 2 NADPH + 3 H(+). The protein operates within tRNA modification; tRNA-queuosine biosynthesis. Catalyzes the NADPH-dependent reduction of 7-cyano-7-deazaguanine (preQ0) to 7-aminomethyl-7-deazaguanine (preQ1). This Chlorobium phaeobacteroides (strain BS1) protein is NADPH-dependent 7-cyano-7-deazaguanine reductase.